Here is a 211-residue protein sequence, read N- to C-terminus: ATP phosphoribosyltransferase (211 aa).

The protein belongs to the ATP phosphoribosyltransferase family. Short subfamily. In terms of assembly, heteromultimer composed of HisG and HisZ subunits.

It localises to the cytoplasm. The catalysed reaction is 1-(5-phospho-beta-D-ribosyl)-ATP + diphosphate = 5-phospho-alpha-D-ribose 1-diphosphate + ATP. The protein operates within amino-acid biosynthesis; L-histidine biosynthesis; L-histidine from 5-phospho-alpha-D-ribose 1-diphosphate: step 1/9. In terms of biological role, catalyzes the condensation of ATP and 5-phosphoribose 1-diphosphate to form N'-(5'-phosphoribosyl)-ATP (PR-ATP). Has a crucial role in the pathway because the rate of histidine biosynthesis seems to be controlled primarily by regulation of HisG enzymatic activity. The polypeptide is ATP phosphoribosyltransferase (Clostridium botulinum (strain 657 / Type Ba4)).